Reading from the N-terminus, the 106-residue chain is Iron-sulfur cluster assembly protein CyaY (106 aa).

The protein belongs to the frataxin family.

Involved in iron-sulfur (Fe-S) cluster assembly. May act as a regulator of Fe-S biogenesis. This is Iron-sulfur cluster assembly protein CyaY from Escherichia coli O127:H6 (strain E2348/69 / EPEC).